The following is a 139-amino-acid chain: D-ribose pyranase (139 aa).

His-20 (proton donor) is an active-site residue. Substrate-binding positions include Asp-28, His-106, and 128–130 (YAN).

This sequence belongs to the RbsD / FucU family. RbsD subfamily. Homodecamer.

The protein resides in the cytoplasm. The catalysed reaction is beta-D-ribopyranose = beta-D-ribofuranose. The protein operates within carbohydrate metabolism; D-ribose degradation; D-ribose 5-phosphate from beta-D-ribopyranose: step 1/2. Functionally, catalyzes the interconversion of beta-pyran and beta-furan forms of D-ribose. The chain is D-ribose pyranase from Vibrio parahaemolyticus serotype O3:K6 (strain RIMD 2210633).